Reading from the N-terminus, the 118-residue chain is Basic phospholipase A2 PA-10A (118 aa).

Disulfide bonds link Cys-11-Cys-71, Cys-27-Cys-117, Cys-29-Cys-45, Cys-44-Cys-98, Cys-51-Cys-91, Cys-60-Cys-84, and Cys-78-Cys-89. Tyr-28, Gly-30, and Gly-32 together coordinate Ca(2+). The active site involves His-48. Residue Asp-49 participates in Ca(2+) binding. Asp-92 is a catalytic residue.

This sequence belongs to the phospholipase A2 family. Group I subfamily. D49 sub-subfamily. The cofactor is Ca(2+). As to expression, expressed by the venom gland.

It localises to the secreted. The catalysed reaction is a 1,2-diacyl-sn-glycero-3-phosphocholine + H2O = a 1-acyl-sn-glycero-3-phosphocholine + a fatty acid + H(+). Its function is as follows. PLA2 catalyzes the calcium-dependent hydrolysis of the 2-acyl groups in 3-sn-phosphoglycerides. This chain is Basic phospholipase A2 PA-10A, found in Pseudechis australis (Mulga snake).